The sequence spans 389 residues: ATP phosphoribosyltransferase regulatory subunit (389 aa).

It belongs to the class-II aminoacyl-tRNA synthetase family. HisZ subfamily. As to quaternary structure, heteromultimer composed of HisG and HisZ subunits.

The protein localises to the cytoplasm. It functions in the pathway amino-acid biosynthesis; L-histidine biosynthesis; L-histidine from 5-phospho-alpha-D-ribose 1-diphosphate: step 1/9. In terms of biological role, required for the first step of histidine biosynthesis. May allow the feedback regulation of ATP phosphoribosyltransferase activity by histidine. The protein is ATP phosphoribosyltransferase regulatory subunit of Moorella thermoacetica (strain ATCC 39073 / JCM 9320).